A 271-amino-acid polypeptide reads, in one-letter code: Mannosyl-3-phosphoglycerate phosphatase (271 aa).

Aspartate 13 acts as the Nucleophile in catalysis. 3 residues coordinate Mg(2+): aspartate 13, aspartate 15, and aspartate 214.

The protein belongs to the HAD-like hydrolase superfamily. MPGP family. Mg(2+) serves as cofactor.

It is found in the cytoplasm. The catalysed reaction is 2-O-(alpha-D-mannosyl)-3-phosphoglycerate + H2O = (2R)-2-O-(alpha-D-mannosyl)-glycerate + phosphate. This is Mannosyl-3-phosphoglycerate phosphatase (yedP) from Escherichia coli O6:H1 (strain CFT073 / ATCC 700928 / UPEC).